The chain runs to 497 residues: 4,4'-diaponeurosporene oxygenase (497 aa).

7–19 contributes to the FAD binding site; the sequence is VIGGGLGGISAAI.

It belongs to the carotenoid/retinoid oxidoreductase family. CrtP subfamily. It depends on FAD as a cofactor.

The enzyme catalyses all-trans-4,4'-diaponeurosporene + 2 AH2 + 2 O2 = 4,4'-diaponeurosporenal + 2 A + 3 H2O. It functions in the pathway carotenoid biosynthesis; staphyloxanthin biosynthesis; staphyloxanthin from farnesyl diphosphate: step 3/5. Involved in the biosynthesis of the yellow-orange carotenoid staphyloxanthin, which plays a role in the virulence via its protective function against oxidative stress. Catalyzes the oxidation of the terminal methyl side group of 4,4'-diaponeurosporene to form 4,4'-diaponeurosporen-4-al. This Staphylococcus aureus (strain bovine RF122 / ET3-1) protein is 4,4'-diaponeurosporene oxygenase.